Consider the following 338-residue polypeptide: 4-hydroxy-2-oxovalerate aldolase (338 aa).

Positions 4–254 constitute a Pyruvate carboxyltransferase domain; sequence PRLTDTTLRD…NPGLDVLALM (251 aa). 12–13 is a substrate binding site; that stretch reads RD. Asp-13 serves as a coordination point for Mn(2+). His-16 (proton acceptor) is an active-site residue. Residues Ser-166 and His-193 each contribute to the substrate site. 2 residues coordinate Mn(2+): His-193 and His-195. Tyr-284 is a binding site for substrate.

Belongs to the 4-hydroxy-2-oxovalerate aldolase family.

It carries out the reaction (S)-4-hydroxy-2-oxopentanoate = acetaldehyde + pyruvate. The protein is 4-hydroxy-2-oxovalerate aldolase of Roseiflexus sp. (strain RS-1).